The sequence spans 147 residues: UPF0179 protein MTH_609 (147 aa).

This sequence belongs to the UPF0179 family.

This Methanothermobacter thermautotrophicus (strain ATCC 29096 / DSM 1053 / JCM 10044 / NBRC 100330 / Delta H) (Methanobacterium thermoautotrophicum) protein is UPF0179 protein MTH_609.